An 856-amino-acid polypeptide reads, in one-letter code: DNA mismatch repair protein MutS (856 aa).

618–625 (GPNMGGKS) is a binding site for ATP.

The protein belongs to the DNA mismatch repair MutS family.

Functionally, this protein is involved in the repair of mismatches in DNA. It is possible that it carries out the mismatch recognition step. This protein has a weak ATPase activity. This is DNA mismatch repair protein MutS from Shewanella baltica (strain OS223).